Reading from the N-terminus, the 265-residue chain is 3-methyl-2-oxobutanoate hydroxymethyltransferase (265 aa).

Mg(2+)-binding residues include Asp44 and Asp83. 3-methyl-2-oxobutanoate is bound by residues 44-45, Asp83, and Lys113; that span reads DS. Glu115 provides a ligand contact to Mg(2+). Residue Glu183 is the Proton acceptor of the active site.

Belongs to the PanB family. Homodecamer; pentamer of dimers. Mg(2+) is required as a cofactor.

It localises to the cytoplasm. The enzyme catalyses 3-methyl-2-oxobutanoate + (6R)-5,10-methylene-5,6,7,8-tetrahydrofolate + H2O = 2-dehydropantoate + (6S)-5,6,7,8-tetrahydrofolate. The protein operates within cofactor biosynthesis; (R)-pantothenate biosynthesis; (R)-pantoate from 3-methyl-2-oxobutanoate: step 1/2. In terms of biological role, catalyzes the reversible reaction in which hydroxymethyl group from 5,10-methylenetetrahydrofolate is transferred onto alpha-ketoisovalerate to form ketopantoate. In Leptospira borgpetersenii serovar Hardjo-bovis (strain L550), this protein is 3-methyl-2-oxobutanoate hydroxymethyltransferase.